The sequence spans 255 residues: Triosephosphate isomerase (255 aa).

Position 9–11 (9–11 (NWK)) interacts with substrate. The Electrophile role is filled by H95. Residue E167 is the Proton acceptor of the active site. Residues G173, S212, and 233-234 (GG) contribute to the substrate site.

It belongs to the triosephosphate isomerase family. Homodimer.

It is found in the cytoplasm. It catalyses the reaction D-glyceraldehyde 3-phosphate = dihydroxyacetone phosphate. It functions in the pathway carbohydrate biosynthesis; gluconeogenesis. Its pathway is carbohydrate degradation; glycolysis; D-glyceraldehyde 3-phosphate from glycerone phosphate: step 1/1. Functionally, involved in the gluconeogenesis. Catalyzes stereospecifically the conversion of dihydroxyacetone phosphate (DHAP) to D-glyceraldehyde-3-phosphate (G3P). This is Triosephosphate isomerase from Salmonella dublin (strain CT_02021853).